The primary structure comprises 108 residues: UPF0145 protein MADE_1007770 (108 aa).

This sequence belongs to the UPF0145 family.

This is UPF0145 protein MADE_1007770 from Alteromonas mediterranea (strain DSM 17117 / CIP 110805 / LMG 28347 / Deep ecotype).